The chain runs to 242 residues: Demethylmenaquinone methyltransferase (242 aa).

Positions 74 and 93 each coordinate S-adenosyl-L-methionine.

Belongs to the class I-like SAM-binding methyltransferase superfamily. MenG/UbiE family.

The catalysed reaction is a 2-demethylmenaquinol + S-adenosyl-L-methionine = a menaquinol + S-adenosyl-L-homocysteine + H(+). Its pathway is quinol/quinone metabolism; menaquinone biosynthesis; menaquinol from 1,4-dihydroxy-2-naphthoate: step 2/2. Its function is as follows. Methyltransferase required for the conversion of demethylmenaquinol (DMKH2) to menaquinol (MKH2). This Chlorobaculum tepidum (strain ATCC 49652 / DSM 12025 / NBRC 103806 / TLS) (Chlorobium tepidum) protein is Demethylmenaquinone methyltransferase.